Reading from the N-terminus, the 188-residue chain is dCTP deaminase (188 aa).

DCTP-binding positions include 111-116 (KSTYAR), 135-137 (TLE), Q156, Y170, and Q180. E137 acts as the Proton donor/acceptor in catalysis.

Belongs to the dCTP deaminase family. In terms of assembly, homotrimer.

It catalyses the reaction dCTP + H2O + H(+) = dUTP + NH4(+). It participates in pyrimidine metabolism; dUMP biosynthesis; dUMP from dCTP (dUTP route): step 1/2. In terms of biological role, catalyzes the deamination of dCTP to dUTP. In Azotobacter vinelandii (strain DJ / ATCC BAA-1303), this protein is dCTP deaminase.